We begin with the raw amino-acid sequence, 573 residues long: Sulfite reductase [NADPH] hemoprotein beta-component (573 aa).

Positions 436, 442, 481, and 485 each coordinate [4Fe-4S] cluster. C485 contributes to the siroheme binding site.

This sequence belongs to the nitrite and sulfite reductase 4Fe-4S domain family. In terms of assembly, alpha(8)-beta(8). The alpha component is a flavoprotein, the beta component is a hemoprotein. Siroheme is required as a cofactor. It depends on [4Fe-4S] cluster as a cofactor.

It catalyses the reaction hydrogen sulfide + 3 NADP(+) + 3 H2O = sulfite + 3 NADPH + 4 H(+). The protein operates within sulfur metabolism; hydrogen sulfide biosynthesis; hydrogen sulfide from sulfite (NADPH route): step 1/1. In terms of biological role, component of the sulfite reductase complex that catalyzes the 6-electron reduction of sulfite to sulfide. This is one of several activities required for the biosynthesis of L-cysteine from sulfate. This chain is Sulfite reductase [NADPH] hemoprotein beta-component, found in Alteromonas mediterranea (strain DSM 17117 / CIP 110805 / LMG 28347 / Deep ecotype).